The primary structure comprises 60 residues: Potassium channel toxin alpha-KTx 3.16 (60 aa).

A signal peptide spans 1 to 23 (MKVFSAVLIILFVCSMIIGISEG). Intrachain disulfides connect Cys-30-Cys-50, Cys-36-Cys-55, and Cys-40-Cys-57.

This sequence belongs to the short scorpion toxin superfamily. Potassium channel inhibitor family. Alpha-KTx 03 subfamily. Expressed by the venom gland.

Its subcellular location is the secreted. Its function is as follows. Potassium channel inhibitor. The protein is Potassium channel toxin alpha-KTx 3.16 of Mesobuthus gibbosus (Mediterranean checkered scorpion).